The following is a 152-amino-acid chain: Leukocyte-associated immunoglobulin-like receptor 2 (152 aa).

Positions Met-1–Thr-21 are cleaved as a signal peptide. In terms of domain architecture, Ig-like C2-type spans Pro-29–Glu-117. A disulfide bond links Cys-49 and Cys-101. Positions Val-120–Pro-152 are disordered.

The protein resides in the secreted. The sequence is that of Leukocyte-associated immunoglobulin-like receptor 2 (LAIR2) from Homo sapiens (Human).